A 490-amino-acid chain; its full sequence is GDP-fucose protein O-fucosyltransferase 2 (490 aa).

Residues 1–25 (MRGSWPRLGFPALLLLLHLLTGSDA) form the signal peptide. Asn-29 and Asn-79 each carry an N-linked (GlcNAc...) asparagine glycan. A GDP-beta-L-fucose-binding site is contributed by 81–85 (SEGFN). Glu-82 (proton acceptor) is an active-site residue. Residues Cys-203 and Cys-226 are joined by a disulfide bond. 336–338 (HLR) lines the GDP-beta-L-fucose pocket. Asn-368 is a glycosylation site (N-linked (GlcNAc...) asparagine). GDP-beta-L-fucose contacts are provided by residues Asp-418 and 435–436 (TF). The cysteines at positions 459 and 466 are disulfide-linked.

This sequence belongs to the glycosyltransferase 68 family.

The protein localises to the endoplasmic reticulum. It localises to the golgi apparatus. It catalyses the reaction L-seryl-[protein] + GDP-beta-L-fucose = 3-O-(alpha-L-fucosyl)-L-seryl-[protein] + GDP + H(+). It carries out the reaction L-threonyl-[protein] + GDP-beta-L-fucose = 3-O-(alpha-L-fucosyl)-L-threonyl-[protein] + GDP + H(+). It participates in protein modification; protein glycosylation. Does not require divalent metal ions for optimal activity. Catalyzes the reaction that attaches fucose through an O-glycosidic linkage to a conserved serine or threonine residue in the consensus sequence C1-X-X-S/T-C2 of thrombospondin type I repeats (TSRs) where C1 and C2 are the first and second cysteines of the repeat, respectively. O-fucosylates members of several protein families including the ADAMTS, the thrombospondin (TSP) and spondin families. This is GDP-fucose protein O-fucosyltransferase 2 from Drosophila melanogaster (Fruit fly).